Here is a 537-residue protein sequence, read N- to C-terminus: Phosphoenolpyruvate carboxykinase (ATP) (537 aa).

Substrate is bound by residues arginine 61, tyrosine 195, and lysine 201. ATP-binding positions include lysine 201, histidine 220, and 236 to 244; that span reads GLSGTGKTT. Residues lysine 201 and histidine 220 each coordinate Mn(2+). Aspartate 257 is a binding site for Mn(2+). Residues glutamate 285, arginine 323, and threonine 448 each coordinate ATP. Arginine 323 is a binding site for substrate.

The protein belongs to the phosphoenolpyruvate carboxykinase (ATP) family. Requires Mn(2+) as cofactor.

The protein resides in the cytoplasm. The catalysed reaction is oxaloacetate + ATP = phosphoenolpyruvate + ADP + CO2. It participates in carbohydrate biosynthesis; gluconeogenesis. Its function is as follows. Involved in the gluconeogenesis. Catalyzes the conversion of oxaloacetate (OAA) to phosphoenolpyruvate (PEP) through direct phosphoryl transfer between the nucleoside triphosphate and OAA. This is Phosphoenolpyruvate carboxykinase (ATP) from Rhodopseudomonas palustris (strain TIE-1).